We begin with the raw amino-acid sequence, 162 residues long: tRNA (cytidine(34)-2'-O)-methyltransferase (162 aa).

S-adenosyl-L-methionine-binding residues include Leu-83, Gly-105, Ile-127, and Ser-135.

It belongs to the class IV-like SAM-binding methyltransferase superfamily. RNA methyltransferase TrmH family. TrmL subfamily. As to quaternary structure, homodimer.

It is found in the cytoplasm. It catalyses the reaction cytidine(34) in tRNA + S-adenosyl-L-methionine = 2'-O-methylcytidine(34) in tRNA + S-adenosyl-L-homocysteine + H(+). The enzyme catalyses 5-carboxymethylaminomethyluridine(34) in tRNA(Leu) + S-adenosyl-L-methionine = 5-carboxymethylaminomethyl-2'-O-methyluridine(34) in tRNA(Leu) + S-adenosyl-L-homocysteine + H(+). Methylates the ribose at the nucleotide 34 wobble position in the two leucyl isoacceptors tRNA(Leu)(CmAA) and tRNA(Leu)(cmnm5UmAA). Catalyzes the methyl transfer from S-adenosyl-L-methionine to the 2'-OH of the wobble nucleotide. The polypeptide is tRNA (cytidine(34)-2'-O)-methyltransferase (Yersinia pestis).